A 353-amino-acid chain; its full sequence is Protein CYTOKININ-RESPONSIVE GATA TRANSCRIPTION FACTOR 1 (353 aa).

The Nuclear localization signal 1 motif lies at 137-144 (IRKGAATD). The segment at 142 to 166 (ATDPEGGAVRKPRRRAQAHQDESQQ) is disordered. The segment at 178–203 (CSDCNTTKTPLWRSGPCGPKSLCNAC) adopts a GATA-type zinc-finger fold. The Nuclear localization signal 2 motif lies at 244–251 (EKRAADVD).

The protein belongs to the type IV zinc-finger family. Class B subfamily. In terms of tissue distribution, mostly expressed in leaves and stems, and, at low levels, in roots.

The protein resides in the nucleus. In terms of biological role, transcriptional regulator that specifically binds 5'-GATA-3' or 5'-GAT-3' motifs within gene promoters. Influences the expression of nuclear encoded chloroplast-targeted genes. Regulates chloroplast development and promotes chlorophyll accumulation. Modulates plant architecture (e.g. height, length and width of leaf blades, and flowering tillers production) and represses tillering, probably by modulating number of cells. Promotes senescence. Involved in grain filling, panicle development and starch production. This Oryza sativa subsp. japonica (Rice) protein is Protein CYTOKININ-RESPONSIVE GATA TRANSCRIPTION FACTOR 1.